The primary structure comprises 672 residues: uncharacterized protein (672 aa).

The first 24 residues, 1–24 (MKTLKTLKIFIIICIASVSLASFA), serve as a signal peptide directing secretion. The next 6 helical transmembrane spans lie at 226 to 246 (IIGA…ALNK), 254 to 274 (IALF…LGPL), 410 to 430 (IILA…LYFI), 436 to 456 (CMIT…MALF), 469 to 489 (VCIS…LLIT), and 562 to 582 (VVSI…FYYF). Residues 626 to 672 (ASQGKPSVGDKPDVGGKRKEGEQQGGDSESGAGGGLADLASGSGGGK) form a disordered region. Over residues 633 to 647 (VGDKPDVGGKRKEGE) the composition is skewed to basic and acidic residues. Gly residues predominate over residues 656–672 (GAGGGLADLASGSGGGK).

This sequence belongs to the TrbL/VirB6 family.

The protein resides in the cell membrane. This is an uncharacterized protein from Rickettsia felis (strain ATCC VR-1525 / URRWXCal2) (Rickettsia azadi).